A 510-amino-acid chain; its full sequence is DNA-directed RNA polymerase I subunit RPA34 (510 aa).

Methionine 1 carries the N-acetylmethionine modification. The tract at residues 1–31 (MEEPQAGDAARFSCPPNFTAKPPASESPRFS) is disordered. Position 27 is a phosphoserine (serine 27). Tyrosine 80 carries the post-translational modification Phosphotyrosine. The interval 120-143 (GPQQSLSGSPLQPIPASPPPQIPP) is disordered. Residues serine 128, serine 136, serine 172, and serine 205 each carry the phosphoserine modification. Positions 131–143 (QPIPASPPPQIPP) are enriched in pro residues. The disordered stretch occupies residues 203-510 (LGSPEMDVRK…KRKQQQQQPV (308 aa)). A compositionally biased stretch (basic and acidic residues) spans 258–270 (GKETFEPEDKTVK). Residue lysine 270 forms a Glycyl lysine isopeptide (Lys-Gly) (interchain with G-Cter in SUMO1); alternate linkage. Residue lysine 270 forms a Glycyl lysine isopeptide (Lys-Gly) (interchain with G-Cter in SUMO2); alternate linkage. Position 285 is a phosphoserine (serine 285). Position 287 is a phosphothreonine (threonine 287). Serine 309 bears the Phosphoserine mark. Lysine 314 participates in a covalent cross-link: Glycyl lysine isopeptide (Lys-Gly) (interchain with G-Cter in SUMO1); alternate. Lysine 314 is covalently cross-linked (Glycyl lysine isopeptide (Lys-Gly) (interchain with G-Cter in SUMO2); alternate). Composition is skewed to low complexity over residues 372–382 (AKPQAQAALAA) and 394–407 (DATVEPETEVVGPE). Residues 421–430 (TKKKKKKKER) show a composition bias toward basic residues. Low complexity predominate over residues 436–452 (EPIQPLEPELPGEGQPE). Serine 490 carries the phosphoserine modification.

Belongs to the eukaryotic RPA34 RNA polymerase subunit family. As to quaternary structure, component of the RNA polymerase I (Pol I) complex consisting of 13 subunits: a ten-subunit catalytic core composed of POLR1A/RPA1, POLR1B/RPA2, POLR1C/RPAC1, POLR1D/RPAC2, POLR1H/RPA12, POLR2E/RPABC1, POLR2F/RPABC2, POLR2H/RPABC3, POLR2K/RPABC4 and POLR2L/RPABC5; a mobile stalk subunit POLR1F/RPA43 protruding from the core and additional subunits homologous to general transcription factors POLR1E/RPA49 and POLR1G/RPA34. Forms a heterodimer with POLR1E/RPA49. Part of Pol I pre-initiation complex (PIC), in which Pol I core assembles with RRN3 and promoter-bound UTBF and SL1/TIF-IB complex. Interacts with TAF1A thereby associates with the SL1/TIF-IB complex. Interacts with UBTF. Interacts with POLR1E/PRAF1 through its N-terminal region. Interacts with CD3E. In terms of processing, undergoes tyrosine phosphorylation upon T-cell receptor (TCR) stimulation. This phosphorylation has not been confirmed by other groups. Post-translationally, phosphorylated on tyrosine residues in initiation-competent Pol I-beta complexes but not in Pol I-alpha complexes.

The protein localises to the nucleus. It is found in the nucleolus. The protein resides in the chromosome. Component of RNA polymerase I (Pol I), a DNA-dependent RNA polymerase which synthesizes ribosomal RNA precursors using the four ribonucleoside triphosphates as substrates. Involved in UBTF-activated transcription, presumably at a step following PIC formation. Functionally, has been described as a component of preformed T-cell receptor (TCR) complex. The polypeptide is DNA-directed RNA polymerase I subunit RPA34 (Homo sapiens (Human)).